Here is a 160-residue protein sequence, read N- to C-terminus: Major pollen allergen Bet v 1-J (160 aa).

Residues Lys55, Tyr82, Tyr84, and Asn101 each contribute to the brassinolide site. Hydrophobic ligand pocket stretches follow at residues 116-118 and 133-141; these read KIN and QIKASKEMG.

Belongs to the BetVI family. As to expression, pollen.

Its subcellular location is the cytoplasm. Its function is as follows. May be a general steroid carrier protein. This Betula pendula (European white birch) protein is Major pollen allergen Bet v 1-J.